Reading from the N-terminus, the 449-residue chain is UDP-N-acetylmuramate--L-alanine ligase (449 aa).

121–127 (GAHGKSS) lines the ATP pocket.

It belongs to the MurCDEF family.

It is found in the cytoplasm. The catalysed reaction is UDP-N-acetyl-alpha-D-muramate + L-alanine + ATP = UDP-N-acetyl-alpha-D-muramoyl-L-alanine + ADP + phosphate + H(+). It functions in the pathway cell wall biogenesis; peptidoglycan biosynthesis. Functionally, cell wall formation. The sequence is that of UDP-N-acetylmuramate--L-alanine ligase from Helicobacter pylori (strain J99 / ATCC 700824) (Campylobacter pylori J99).